Consider the following 79-residue polypeptide: Toxin 3FTx-Oxy5 (79 aa).

An N-terminal signal peptide occupies residues 1-23 (MKTLLLTLVVMTIVCLDLGYTLT). 4 disulfide bridges follow: C24-C41, C34-C59, C63-C71, and C72-C77.

Belongs to the three-finger toxin family. Short-chain subfamily. Expressed by the venom gland.

It localises to the secreted. The polypeptide is Toxin 3FTx-Oxy5 (Oxyuranus microlepidotus (Inland taipan)).